Here is a 22-residue protein sequence, read N- to C-terminus: Chlorophyllase type 1 (22 aa).

Belongs to the AB hydrolase superfamily. Lipase family.

It catalyses the reaction a chlorophyll + H2O = a chlorophyllide + phytol + H(+). Its pathway is porphyrin-containing compound metabolism; chlorophyll degradation. Its function is as follows. Catalyzes the hydrolysis of ester bond in chlorophyll to yield chlorophyllide and phytol. This chain is Chlorophyllase type 1, found in Chenopodium album (Fat hen).